The chain runs to 30 residues: ATP-dependent Clp protease ATP-binding subunit ClpA homolog (30 aa).

This sequence belongs to the ClpA/ClpB family.

It is found in the plastid. The protein resides in the chloroplast. May interact with a ClpP-like protease involved in degradation of denatured proteins in the chloroplast. The chain is ATP-dependent Clp protease ATP-binding subunit ClpA homolog from Pinus pinaster (Maritime pine).